The primary structure comprises 151 residues: UPF0208 membrane protein YfbV (151 aa).

Helical transmembrane passes span 46 to 65 (YAIR…QIAL) and 69 to 91 (LGPA…WWLG).

It belongs to the UPF0208 family.

Its subcellular location is the cell inner membrane. The polypeptide is UPF0208 membrane protein YfbV (Salmonella choleraesuis (strain SC-B67)).